The sequence spans 573 residues: 60 kDa heat shock protein, mitochondrial (573 aa).

The N-terminal 26 residues, methionine 1 to tyrosine 26, are a transit peptide targeting the mitochondrion. Residues lysine 75 and aspartate 111 to threonine 115 each bind ATP. At tyrosine 227 the chain carries Phosphotyrosine. Residues glycine 440 and aspartate 520 each coordinate ATP.

Its subcellular location is the mitochondrion matrix. The catalysed reaction is ATP + H2O + a folded polypeptide = ADP + phosphate + an unfolded polypeptide.. In terms of biological role, chaperonin implicated in mitochondrial protein import and macromolecular assembly. Together with Hsp10, facilitates the correct folding of imported proteins. May also prevent misfolding and promote the refolding and proper assembly of unfolded polypeptides generated under stress conditions in the mitochondrial matrix. The functional units of these chaperonins consist of heptameric rings of the large subunit Hsp60, which function as a back-to-back double ring. In a cyclic reaction, Hsp60 ring complexes bind one unfolded substrate protein per ring, followed by the binding of ATP and association with 2 heptameric rings of the co-chaperonin Hsp10. This leads to sequestration of the substrate protein in the inner cavity of Hsp60 where, for a certain period of time, it can fold undisturbed by other cell components. Synchronous hydrolysis of ATP in all Hsp60 subunits results in the dissociation of the chaperonin rings and the release of ADP and the folded substrate protein. This is 60 kDa heat shock protein, mitochondrial from Gallus gallus (Chicken).